Reading from the N-terminus, the 346-residue chain is Holliday junction branch migration complex subunit RuvB (346 aa).

Residues Met1–Tyr182 are large ATPase domain (RuvB-L). Residues Ile21, Arg22, Gly63, Lys66, Thr67, Thr68, Glu129 to Phe131, Arg172, Tyr182, and Arg219 each bind ATP. Thr67 is a Mg(2+) binding site. The tract at residues Ser183–Asp253 is small ATPAse domain (RuvB-S). The tract at residues Glu256–Ser346 is head domain (RuvB-H). DNA contacts are provided by Arg311 and Arg316.

This sequence belongs to the RuvB family. In terms of assembly, homohexamer. Forms an RuvA(8)-RuvB(12)-Holliday junction (HJ) complex. HJ DNA is sandwiched between 2 RuvA tetramers; dsDNA enters through RuvA and exits via RuvB. An RuvB hexamer assembles on each DNA strand where it exits the tetramer. Each RuvB hexamer is contacted by two RuvA subunits (via domain III) on 2 adjacent RuvB subunits; this complex drives branch migration. In the full resolvosome a probable DNA-RuvA(4)-RuvB(12)-RuvC(2) complex forms which resolves the HJ.

It is found in the cytoplasm. The catalysed reaction is ATP + H2O = ADP + phosphate + H(+). Functionally, the RuvA-RuvB-RuvC complex processes Holliday junction (HJ) DNA during genetic recombination and DNA repair, while the RuvA-RuvB complex plays an important role in the rescue of blocked DNA replication forks via replication fork reversal (RFR). RuvA specifically binds to HJ cruciform DNA, conferring on it an open structure. The RuvB hexamer acts as an ATP-dependent pump, pulling dsDNA into and through the RuvAB complex. RuvB forms 2 homohexamers on either side of HJ DNA bound by 1 or 2 RuvA tetramers; 4 subunits per hexamer contact DNA at a time. Coordinated motions by a converter formed by DNA-disengaged RuvB subunits stimulates ATP hydrolysis and nucleotide exchange. Immobilization of the converter enables RuvB to convert the ATP-contained energy into a lever motion, pulling 2 nucleotides of DNA out of the RuvA tetramer per ATP hydrolyzed, thus driving DNA branch migration. The RuvB motors rotate together with the DNA substrate, which together with the progressing nucleotide cycle form the mechanistic basis for DNA recombination by continuous HJ branch migration. Branch migration allows RuvC to scan DNA until it finds its consensus sequence, where it cleaves and resolves cruciform DNA. The polypeptide is Holliday junction branch migration complex subunit RuvB (Chlorobium phaeovibrioides (strain DSM 265 / 1930) (Prosthecochloris vibrioformis (strain DSM 265))).